Reading from the N-terminus, the 209-residue chain is Large ribosomal subunit protein uL3 (209 aa).

A disordered region spans residues 125-148; the sequence is RHGQSRGPMAHGSRYHRRPGSMGP.

Belongs to the universal ribosomal protein uL3 family. In terms of assembly, part of the 50S ribosomal subunit. Forms a cluster with proteins L14 and L19.

Its function is as follows. One of the primary rRNA binding proteins, it binds directly near the 3'-end of the 23S rRNA, where it nucleates assembly of the 50S subunit. The chain is Large ribosomal subunit protein uL3 from Lysinibacillus sphaericus (strain C3-41).